The primary structure comprises 457 residues: Elongation factor 1-alpha (457 aa).

G2 bears the N,N,N-trimethylglycine mark. N6,N6-dimethyllysine; alternate is present on K3. The residue at position 3 (K3) is an N6-methyllysine; alternate. The region spanning K5–S240 is the tr-type G domain. The tract at residues G14–S21 is G1. GTP is bound at residue G14–S21. An N6-methyllysine modification is found at K30. The G2 stretch occupies residues G70–D74. An N6,N6,N6-trimethyllysine modification is found at K79. The interval D91–G94 is G3. GTP is bound by residues D91–H95 and N153–D156. The tract at residues N153 to D156 is G4. The G5 stretch occupies residues S192 to W194. K316 is modified (N6,N6-dimethyllysine; alternate). The residue at position 316 (K316) is an N6-methyllysine; alternate. K389 is subject to N6-methyllysine.

The protein belongs to the TRAFAC class translation factor GTPase superfamily. Classic translation factor GTPase family. EF-Tu/EF-1A subfamily.

The protein resides in the cytoplasm. Its function is as follows. This protein promotes the GTP-dependent binding of aminoacyl-tRNA to the A-site of ribosomes during protein biosynthesis. The polypeptide is Elongation factor 1-alpha (TEF-3) (Mucor circinelloides f. lusitanicus (Mucor racemosus var. lusitanicus)).